The primary structure comprises 171 residues: NADH-quinone oxidoreductase subunit I (171 aa).

4Fe-4S ferredoxin-type domains lie at 63-92 (RRYENGEERCIACKLCEAVCPALAITIESD) and 102-131 (TRYDIDLTKCIFCGFCEESCPVDSIVETQI). [4Fe-4S] cluster-binding residues include Cys-72, Cys-75, Cys-78, Cys-82, Cys-111, Cys-114, Cys-117, and Cys-121.

This sequence belongs to the complex I 23 kDa subunit family. As to quaternary structure, NDH-1 is composed of 14 different subunits. Subunits NuoA, H, J, K, L, M, N constitute the membrane sector of the complex. [4Fe-4S] cluster serves as cofactor.

It is found in the cell inner membrane. The enzyme catalyses a quinone + NADH + 5 H(+)(in) = a quinol + NAD(+) + 4 H(+)(out). Functionally, NDH-1 shuttles electrons from NADH, via FMN and iron-sulfur (Fe-S) centers, to quinones in the respiratory chain. The immediate electron acceptor for the enzyme in this species is believed to be ubiquinone. Couples the redox reaction to proton translocation (for every two electrons transferred, four hydrogen ions are translocated across the cytoplasmic membrane), and thus conserves the redox energy in a proton gradient. This is NADH-quinone oxidoreductase subunit I from Paracidovorax citrulli (strain AAC00-1) (Acidovorax citrulli).